The chain runs to 414 residues: COUP transcription factor 2 (414 aa).

The interval 1–72 is disordered; the sequence is MAMVVSTWRD…PGGPGSDKQQ (72 aa). Positions 27 to 37 are enriched in pro residues; that stretch reads PPVPGPPPGAP. A compositionally biased stretch (low complexity) spans 38–54; sequence HTPQTPGQGGPASTPAQ. Threonine 51 bears the Phosphothreonine mark. A DNA-binding region (nuclear receptor) is located at residues 76 to 151; sequence HIECVVCGDK…VGMRREAVQR (76 aa). 2 NR C4-type zinc fingers span residues 79–99 and 115–139; these read CVVCGDKSSGKHYGQFTCEGC and CRANRNCPIDQHHRNQCQYCRLKKC. Positions 117-414 are interaction with ZFPM2; it reads ANRNCPIDQH…SFNWPYMAIQ (298 aa). Residues 177-403 form the NR LBD domain; the sequence is YLSGYISLLL…TLIRDMLLSG (227 aa). The tract at residues 337-414 is important for dimerization; the sequence is LQEKSQCALE…SFNWPYMAIQ (78 aa).

Belongs to the nuclear hormone receptor family. NR2 subfamily. Interacts with SQSTM1. Binds DNA as a dimer; homodimer or heterodimer with NR2F6. Interacts with NCOA1, NCOA2, NCOA3 and PPARGC1A. Interacts with ZFPM2.

It localises to the nucleus. Its function is as follows. Ligand-activated transcription factor. Activated by high concentrations of 9-cis-retinoic acid and all-trans-retinoic acid, but not by dexamethasone, cortisol or progesterone (in vitro). Regulation of the apolipoprotein A-I gene transcription. Binds to DNA site A. May be required to establish ovary identity during early gonad development. This is COUP transcription factor 2 (Nr2f2) from Rattus norvegicus (Rat).